Here is a 973-residue protein sequence, read N- to C-terminus: UvrABC system protein A (973 aa).

34–41 (GLSGSGKS) lines the ATP pocket. 2 consecutive ABC transporter domains span residues 331–609 (WAKS…PKSL) and 629–958 (PKKK…QFLK). 662–669 (GVSGGGKS) serves as a coordination point for ATP. Residues 761–787 (CEACQGDGVIKIEMHFLPDVYVTCDVC) form a C4-type zinc finger.

The protein belongs to the ABC transporter superfamily. UvrA family. Forms a heterotetramer with UvrB during the search for lesions.

The protein localises to the cytoplasm. The UvrABC repair system catalyzes the recognition and processing of DNA lesions. UvrA is an ATPase and a DNA-binding protein. A damage recognition complex composed of 2 UvrA and 2 UvrB subunits scans DNA for abnormalities. When the presence of a lesion has been verified by UvrB, the UvrA molecules dissociate. The polypeptide is UvrABC system protein A (Rhizobium meliloti (strain 1021) (Ensifer meliloti)).